A 28-amino-acid polypeptide reads, in one-letter code: uncharacterized protein (28 aa).

Residues 1–18 are compositionally biased toward basic residues; that stretch reads MLPRKYKPAYKKQAHRVK. Residues 1–28 form a disordered region; it reads MLPRKYKPAYKKQAHRVKSNPQPAYTFQ. The segment covering 19–28 has biased composition (polar residues); the sequence is SNPQPAYTFQ.

This is an uncharacterized protein from Saccharomyces cerevisiae (strain ATCC 204508 / S288c) (Baker's yeast).